Reading from the N-terminus, the 202-residue chain is Dual-action ribosomal maturation protein DarP (202 aa).

Residues 1-13 (MPPMTRNTRNNPN) show a composition bias toward low complexity. The interval 1 to 39 (MPPMTRNTRNNPNGRFPGAFAPEDEDDLPKSKSQRKRDM) is disordered.

This sequence belongs to the DarP family.

It is found in the cytoplasm. Member of a network of 50S ribosomal subunit biogenesis factors which assembles along the 30S-50S interface, preventing incorrect 23S rRNA structures from forming. Promotes peptidyl transferase center (PTC) maturation. The sequence is that of Dual-action ribosomal maturation protein DarP from Cupriavidus metallidurans (strain ATCC 43123 / DSM 2839 / NBRC 102507 / CH34) (Ralstonia metallidurans).